Here is a 439-residue protein sequence, read N- to C-terminus: tRNA modification GTPase MnmE (439 aa).

(6S)-5-formyl-5,6,7,8-tetrahydrofolate-binding residues include Arg24, Glu81, and Lys121. Positions 218-363 (GFKVVIAGAP…LRRLIGDIVE (146 aa)) constitute a TrmE-type G domain. Asn228 is a binding site for K(+). GTP contacts are provided by residues 228-233 (NAGKSS), 247-253 (TEIAGTT), and 272-275 (DTAG). Ser232 is a Mg(2+) binding site. The K(+) site is built by Thr247, Ile249, and Thr252. Thr253 serves as a coordination point for Mg(2+). Residue Lys439 participates in (6S)-5-formyl-5,6,7,8-tetrahydrofolate binding.

This sequence belongs to the TRAFAC class TrmE-Era-EngA-EngB-Septin-like GTPase superfamily. TrmE GTPase family. Homodimer. Heterotetramer of two MnmE and two MnmG subunits. K(+) serves as cofactor.

The protein resides in the cytoplasm. Its function is as follows. Exhibits a very high intrinsic GTPase hydrolysis rate. Involved in the addition of a carboxymethylaminomethyl (cmnm) group at the wobble position (U34) of certain tRNAs, forming tRNA-cmnm(5)s(2)U34. This is tRNA modification GTPase MnmE from Rhizobium johnstonii (strain DSM 114642 / LMG 32736 / 3841) (Rhizobium leguminosarum bv. viciae).